We begin with the raw amino-acid sequence, 655 residues long: Acetyl-coenzyme A synthetase (655 aa).

Residues 196–199 and T316 contribute to the CoA site; that span reads RGGR. ATP is bound by residues 392-394, 416-421, D508, and R523; these read GEP and DTWWQT. S531 lines the CoA pocket. Position 534 (R534) interacts with ATP. Positions 545, 547, and 550 each coordinate Mg(2+). K620 is subject to N6-acetyllysine.

Belongs to the ATP-dependent AMP-binding enzyme family. Mg(2+) serves as cofactor. Acetylated. Deacetylation by the SIR2-homolog deacetylase activates the enzyme.

It carries out the reaction acetate + ATP + CoA = acetyl-CoA + AMP + diphosphate. In terms of biological role, catalyzes the conversion of acetate into acetyl-CoA (AcCoA), an essential intermediate at the junction of anabolic and catabolic pathways. AcsA undergoes a two-step reaction. In the first half reaction, AcsA combines acetate with ATP to form acetyl-adenylate (AcAMP) intermediate. In the second half reaction, it can then transfer the acetyl group from AcAMP to the sulfhydryl group of CoA, forming the product AcCoA. The protein is Acetyl-coenzyme A synthetase of Nitrosomonas europaea (strain ATCC 19718 / CIP 103999 / KCTC 2705 / NBRC 14298).